A 910-amino-acid chain; its full sequence is Schlafen family member 8 (910 aa).

The segment at 1–354 is n'-domain region; sequence METHPSLAVK…WVRMMVDFGP (354 aa). Catalysis depends on residues Glu-205 and Glu-210. His-280, Cys-282, and Cys-319 together coordinate Zn(2+). 599 to 606 is an ATP binding site; the sequence is GLPGSGKT.

The protein belongs to the Schlafen family. Subgroup III subfamily. The cofactor is Mg(2+). In T-cells, expressed at relatively constant levels during development: expressed in immature CD3(-)CD4(-)CD8(-) T-cells (DN stage), in CD4(+)CD8(+) double-positive stage (DP) and mature CD4(+) or CD8(+) thymocytes. Expression is slightly reduced at the DP stage.

The protein resides in the cytoplasm. Its function is as follows. Endoribonuclease that cleaves tRNAs and rRNAs. Cleaves tRNAs 11 nucleotides from the 3'-terminus at the acceptor stem. May be involved in immune system via regulation of inflammation. This Mus musculus (Mouse) protein is Schlafen family member 8.